A 320-amino-acid polypeptide reads, in one-letter code: GTP 3',8-cyclase (320 aa).

One can recognise a Radical SAM core domain in the interval 4–227; the sequence is LYSRRINYMR…METEKSSPAK (224 aa). Position 13 (arginine 13) interacts with GTP. Cysteine 20 and cysteine 24 together coordinate [4Fe-4S] cluster. Residue tyrosine 26 coordinates S-adenosyl-L-methionine. Cysteine 27 contacts [4Fe-4S] cluster. Arginine 63 contributes to the GTP binding site. Glycine 67 provides a ligand contact to S-adenosyl-L-methionine. Threonine 94 serves as a coordination point for GTP. Serine 118 serves as a coordination point for S-adenosyl-L-methionine. Residue lysine 155 participates in GTP binding. Methionine 189 provides a ligand contact to S-adenosyl-L-methionine. 2 residues coordinate [4Fe-4S] cluster: cysteine 249 and cysteine 252. Position 254–256 (254–256) interacts with GTP; it reads RVR. Position 266 (cysteine 266) interacts with [4Fe-4S] cluster. The segment covering 300–312 has biased composition (basic and acidic residues); the sequence is KHDLLTDSHEESN. The disordered stretch occupies residues 300 to 320; it reads KHDLLTDSHEESNRGMSQIGG.

This sequence belongs to the radical SAM superfamily. MoaA family. As to quaternary structure, monomer and homodimer. Requires [4Fe-4S] cluster as cofactor.

The enzyme catalyses GTP + AH2 + S-adenosyl-L-methionine = (8S)-3',8-cyclo-7,8-dihydroguanosine 5'-triphosphate + 5'-deoxyadenosine + L-methionine + A + H(+). Its pathway is cofactor biosynthesis; molybdopterin biosynthesis. Functionally, catalyzes the cyclization of GTP to (8S)-3',8-cyclo-7,8-dihydroguanosine 5'-triphosphate. This chain is GTP 3',8-cyclase, found in Alkaliphilus oremlandii (strain OhILAs) (Clostridium oremlandii (strain OhILAs)).